Here is a 77-residue protein sequence, read N- to C-terminus: U14-theraphotoxin-Cg1a 1 (77 aa).

The N-terminal stretch at 1–21 (MKTSVLLVILGIAAITVQCTA) is a signal peptide. Positions 22 to 49 (SESVEQDSLRTFVDAVLGWNAEMASEAR) are excised as a propeptide. 3 cysteine pairs are disulfide-bonded: Cys-50/Cys-64, Cys-57/Cys-69, and Cys-63/Cys-75. Lys-77 bears the Lysine amide mark.

The protein belongs to the neurotoxin 10 (Hwtx-1) family. 65 (Jztx-21) subfamily. Expressed by the venom gland.

It localises to the secreted. In terms of biological role, probable ion channel inhibitor. This chain is U14-theraphotoxin-Cg1a 1, found in Chilobrachys guangxiensis (Chinese earth tiger tarantula).